The sequence spans 181 residues: Large ribosomal subunit protein bL19 (181 aa).

Basic and acidic residues predominate over residues 162 to 173; it reads EKKAAAEAEAAK. The interval 162 to 181 is disordered; it reads EKKAAAEAEAAKAAEATPAE.

It belongs to the bacterial ribosomal protein bL19 family.

In terms of biological role, this protein is located at the 30S-50S ribosomal subunit interface and may play a role in the structure and function of the aminoacyl-tRNA binding site. The polypeptide is Large ribosomal subunit protein bL19 (Mesorhizobium japonicum (strain LMG 29417 / CECT 9101 / MAFF 303099) (Mesorhizobium loti (strain MAFF 303099))).